We begin with the raw amino-acid sequence, 245 residues long: MPATNLVGLDLVGIGHRYRDTTVLHDIDLTVEPGEFVSFLGPSGVGKSTLLRIIAGLEQPTHGVVESTGGTSGGTMSRMMFQEDRLLPWRNVLDNVQLGTRHQRERALELLYDVGLAGREKDWPSELSGGQRQRVALARALLHQPDVLLLDEPFGALDAITRVAMQQLLERVLAEQPRTVLLVTHDVEEALVLSDRVLLLTDQGITRDLRIPHARPRHRGDAQLAAWKEELLDGLLQADNALSSL.

The 219-residue stretch at L9 to W227 folds into the ABC transporter domain. G41–S48 serves as a coordination point for ATP.

It belongs to the ABC transporter superfamily. Aliphatic sulfonates importer (TC 3.A.1.17.2) family. As to quaternary structure, the complex is composed of two ATP-binding proteins (SsuB), two transmembrane proteins (SsuC) and a solute-binding protein (SsuA).

It is found in the cell membrane. It catalyses the reaction ATP + H2O + aliphatic sulfonate-[sulfonate-binding protein]Side 1 = ADP + phosphate + aliphatic sulfonateSide 2 + [sulfonate-binding protein]Side 1.. Its function is as follows. Part of the ABC transporter complex SsuABC involved in aliphatic sulfonates import. Responsible for energy coupling to the transport system. The polypeptide is Aliphatic sulfonates import ATP-binding protein SsuB 1 (Rhodococcus jostii (strain RHA1)).